The sequence spans 298 residues: Acetyl-coenzyme A carboxylase carboxyl transferase subunit beta (298 aa).

A CoA carboxyltransferase N-terminal domain is found at 25–295 (VWAKCANCGE…SADHREHVVA (271 aa)). C29, C32, C48, and C51 together coordinate Zn(2+). The segment at 29–51 (CANCGELTYQKQFNDALKVCPKC) adopts a C4-type zinc-finger fold.

It belongs to the AccD/PCCB family. Acetyl-CoA carboxylase is a heterohexamer composed of biotin carboxyl carrier protein (AccB), biotin carboxylase (AccC) and two subunits each of ACCase subunit alpha (AccA) and ACCase subunit beta (AccD). Zn(2+) is required as a cofactor.

Its subcellular location is the cytoplasm. The enzyme catalyses N(6)-carboxybiotinyl-L-lysyl-[protein] + acetyl-CoA = N(6)-biotinyl-L-lysyl-[protein] + malonyl-CoA. It functions in the pathway lipid metabolism; malonyl-CoA biosynthesis; malonyl-CoA from acetyl-CoA: step 1/1. In terms of biological role, component of the acetyl coenzyme A carboxylase (ACC) complex. Biotin carboxylase (BC) catalyzes the carboxylation of biotin on its carrier protein (BCCP) and then the CO(2) group is transferred by the transcarboxylase to acetyl-CoA to form malonyl-CoA. This Herpetosiphon aurantiacus (strain ATCC 23779 / DSM 785 / 114-95) protein is Acetyl-coenzyme A carboxylase carboxyl transferase subunit beta.